The chain runs to 311 residues: Taste receptor type 2 member 9 (311 aa).

At 1-9 the chain is on the extracellular side; it reads MPSTIEAIY. Residues 10 to 32 traverse the membrane as a helical segment; that stretch reads IILIAGELTIGIWGNGFIVLVNC. Over 33 to 52 the chain is Cytoplasmic; sequence IDWLKRRDVSLIDIILISLA. A helical membrane pass occupies residues 53-72; it reads ISRICLLCVISLDGFFILLF. The Extracellular portion of the chain corresponds to 73–86; the sequence is PGTYDINVLESIMD. Residues 87–109 form a helical membrane-spanning segment; that stretch reads AVWTFANNSSLWFTSCLSIFYLL. The Cytoplasmic segment spans residues 110–128; that stretch reads KIANISHPFFFWLKLKINK. The chain crosses the membrane as a helical span at residues 129–146; it reads VILAILLGSFLISLIISF. At 147–179 the chain is on the extracellular side; that stretch reads PINGXWYHLFKVSHEENITWAFKVSTIPGAFKQ. A glycan (N-linked (GlcNAc...) asparagine) is linked at Asn163. A helical transmembrane segment spans residues 180 to 202; sequence LTLNLGAMVPFMLCLISFFLLLF. At 203–233 the chain is on the cytoplasmic side; that stretch reads SLVRHTKQIQLHATGLRDPSTEAHMRAIKAV. Residues 234-256 form a helical membrane-spanning segment; it reads IIFLLLLIVYYPVFLVMTSSTLI. Over 257-260 the chain is Extracellular; the sequence is PQGK. Residues 261–283 traverse the membrane as a helical segment; sequence LVLMIGDIVTVIFPSSHSFILIM. Topologically, residues 284 to 311 are cytoplasmic; sequence GNSKLREAFLKMLRFVKGFLRRRKPFGP.

This sequence belongs to the G-protein coupled receptor T2R family.

Its subcellular location is the membrane. Gustducin-coupled receptor implicated in the perception of bitter compounds in the oral cavity and the gastrointestinal tract. Signals through PLCB2 and the calcium-regulated cation channel TRPM5. In Papio hamadryas (Hamadryas baboon), this protein is Taste receptor type 2 member 9 (TAS2R9).